Reading from the N-terminus, the 397-residue chain is Chorismate synthase (397 aa).

NADP(+) is bound by residues R40 and R46. Residues 129-131 (RAS), 257-258 (QA), G302, 317-321 (KPIAT), and R343 each bind FMN.

It belongs to the chorismate synthase family. As to quaternary structure, homotetramer. The cofactor is FMNH2.

The catalysed reaction is 5-O-(1-carboxyvinyl)-3-phosphoshikimate = chorismate + phosphate. It functions in the pathway metabolic intermediate biosynthesis; chorismate biosynthesis; chorismate from D-erythrose 4-phosphate and phosphoenolpyruvate: step 7/7. Catalyzes the anti-1,4-elimination of the C-3 phosphate and the C-6 proR hydrogen from 5-enolpyruvylshikimate-3-phosphate (EPSP) to yield chorismate, which is the branch point compound that serves as the starting substrate for the three terminal pathways of aromatic amino acid biosynthesis. This reaction introduces a second double bond into the aromatic ring system. This Prosthecochloris aestuarii (strain DSM 271 / SK 413) protein is Chorismate synthase.